We begin with the raw amino-acid sequence, 1782 residues long: Atrochrysone carboxylic acid synthase (1782 aa).

Residues 41 to 270 (HTYTKDRRYP…ALPVYGGLCH (230 aa)) form an N-terminal acylcarrier protein transacylase domain (SAT) region. In terms of domain architecture, Ketosynthase family 3 (KS3) spans 407 to 841 (QSKIAIVGMS…GGNSTLAIEE (435 aa)). Catalysis depends on for beta-ketoacyl synthase activity residues Cys-580, His-716, and His-759. Positions 946 to 1266 (FAFTGQGSSY…LGILHCAGVP (321 aa)) are malonyl-CoA:ACP transacylase (MAT) domain. Positions 1331 to 1648 (TSTVQQIIHE…RILLNRFFSA (318 aa)) are product template (PT) domain. The tract at residues 1335-1468 (QQIIHEQYDG…ATVYYEEASD (134 aa)) is N-terminal hotdog fold. Positions 1335–1643 (QQIIHEQYDG…FRRYPRILLN (309 aa)) constitute a PKS/mFAS DH domain. Catalysis depends on His-1367, which acts as the Proton acceptor; for dehydratase activity. The interval 1495-1643 (VANRFTRRMA…FRRYPRILLN (149 aa)) is C-terminal hotdog fold. Asp-1554 acts as the Proton donor; for dehydratase activity in catalysis. The disordered stretch occupies residues 1653–1703 (ARKSTPATSAPAPAPPAGSEALQPKAAPASTPAAPASADAPTTNGVKAAAE). Residues 1678–1695 (AAPASTPAAPASADAPTT) show a composition bias toward low complexity. Residues 1704 to 1781 (PDANSTAAKA…DLKSWLLEYY (78 aa)) enclose the Carrier domain. The residue at position 1741 (Ser-1741) is an O-(pantetheine 4'-phosphoryl)serine.

Specifically expressed in conidia.

The catalysed reaction is holo-[ACP] + 8 malonyl-CoA + 8 H(+) = atrochrysone carboxyl-[ACP] + 8 CO2 + 8 CoA + 2 H2O. It participates in secondary metabolite biosynthesis. Functionally, non-reducing polyketide synthase; part of the gene cluster that mediates the biosynthesis of trypacidin, a mycotoxin with antiprotozoal activity and that plays a role in the infection process. The pathway begins with the synthesis of atrochrysone thioester by the polyketide synthase (PKS) tpcC. The atrochrysone carboxyl ACP thioesterase tpcB then breaks the thioester bond and releases the atrochrysone carboxylic acid from tpcC. The decarboxylase tpcK converts atrochrysone carboxylic acid to atrochrysone which is further reduced into emodin anthrone. The next step is performed by the emodin anthrone oxygenase tpcL that catalyzes the oxidation of emodin anthrone to emodin. Emodin O-methyltransferase encoded by tpcA catalyzes methylation of the 8-hydroxy group of emodin to form questin. Ring cleavage of questin by questin oxidase tpcI leads to desmethylsulochrin via several intermediates including questin epoxide. Another methylation step catalyzed by tpcM leads to the formation of sulochrin which is further converted to monomethylsulfochrin by tpcH. Finally, the tpcJ catalyzes the conversion of monomethylsulfochrin to trypacidin. Trypacidin is toxic for human pulmonary and bronchial epithelial cells by initiating the intracellular formation of nitric oxide (NO) and hydrogen peroxide (H(2)O(2)), thus triggering host necrotic cell death. The trypacidin pathway is also able to produce endocrocin via a distinct route from the endocrocin Enc pathway. This Aspergillus fumigatus (strain ATCC MYA-4609 / CBS 101355 / FGSC A1100 / Af293) (Neosartorya fumigata) protein is Atrochrysone carboxylic acid synthase.